Here is a 186-residue protein sequence, read N- to C-terminus: Coiled-coil domain-containing protein ORF13 (186 aa).

Coiled coils occupy residues 2–30 (GIKE…DFIK) and 63–85 (LREK…QRDK).

The protein is Coiled-coil domain-containing protein ORF13 of Helicobacter pylori (strain 35A).